The following is a 355-amino-acid chain: Erythronate-4-phosphate dehydrogenase (355 aa).

2 residues coordinate substrate: Ser-45 and Thr-66. An NAD(+)-binding site is contributed by Asp-146. Residue Arg-206 is part of the active site. Asp-229 contributes to the NAD(+) binding site. Glu-234 is an active-site residue. The Proton donor role is filled by His-251. Gly-254 contacts NAD(+). Tyr-255 serves as a coordination point for substrate.

The protein belongs to the D-isomer specific 2-hydroxyacid dehydrogenase family. PdxB subfamily. In terms of assembly, homodimer.

It is found in the cytoplasm. The catalysed reaction is 4-phospho-D-erythronate + NAD(+) = (R)-3-hydroxy-2-oxo-4-phosphooxybutanoate + NADH + H(+). It functions in the pathway cofactor biosynthesis; pyridoxine 5'-phosphate biosynthesis; pyridoxine 5'-phosphate from D-erythrose 4-phosphate: step 2/5. Catalyzes the oxidation of erythronate-4-phosphate to 3-hydroxy-2-oxo-4-phosphonooxybutanoate. In Acinetobacter baumannii (strain SDF), this protein is Erythronate-4-phosphate dehydrogenase.